We begin with the raw amino-acid sequence, 149 residues long: Large ribosomal subunit protein uL15 (149 aa).

Composition is skewed to basic residues over residues 1–14 (MPSR…HRGH) and 21–30 (RIGKHRKHPG). Residues 1–39 (MPSRFTKTRKHRGHVSAGKGRIGKHRKHPGGRGMAGGQH) are disordered. Short sequence motifs (nuclear localization signal) lie at residues 7 to 13 (KTRKHRG) and 24 to 30 (KHRKHPG). Lys96 participates in a covalent cross-link: Glycyl lysine isopeptide (Lys-Gly) (interchain with G-Cter in ubiquitin).

It belongs to the universal ribosomal protein uL15 family. In terms of assembly, component of the large ribosomal subunit (LSU). Mature yeast ribosomes consist of a small (40S) and a large (60S) subunit. The 40S small subunit contains 1 molecule of ribosomal RNA (18S rRNA) and 33 different proteins (encoded by 57 genes). The large 60S subunit contains 3 rRNA molecules (25S, 5.8S and 5S rRNA) and 46 different proteins (encoded by 81 genes).

Its subcellular location is the cytoplasm. Its function is as follows. Component of the ribosome, a large ribonucleoprotein complex responsible for the synthesis of proteins in the cell. The small ribosomal subunit (SSU) binds messenger RNAs (mRNAs) and translates the encoded message by selecting cognate aminoacyl-transfer RNA (tRNA) molecules. The large subunit (LSU) contains the ribosomal catalytic site termed the peptidyl transferase center (PTC), which catalyzes the formation of peptide bonds, thereby polymerizing the amino acids delivered by tRNAs into a polypeptide chain. The nascent polypeptides leave the ribosome through a tunnel in the LSU and interact with protein factors that function in enzymatic processing, targeting, and the membrane insertion of nascent chains at the exit of the ribosomal tunnel. The polypeptide is Large ribosomal subunit protein uL15 (Saccharomyces cerevisiae (strain ATCC 204508 / S288c) (Baker's yeast)).